We begin with the raw amino-acid sequence, 362 residues long: F-box protein At2g14710 (362 aa).

One can recognise an F-box domain in the interval 1–47; it reads MAHLKNLPWELIEEILSRVPPKSLVRFRTVSKQWNALFDDKTFINNH.

This Arabidopsis thaliana (Mouse-ear cress) protein is F-box protein At2g14710.